We begin with the raw amino-acid sequence, 146 residues long: MFVGEYYHSLDEKGRLIIPNDFRQLLGETFYLTRGFERCLNIYTITDWNNFSQIISSFSPTDNLMRKLCRFWFSGSIQVTTDKLGRILIPSFLIEYAELSKEVVIIGAGKHIEIWAKEKWEEFNKEENILENMNEINSKVAELWKK.

SpoVT-AbrB domains follow at residues 5 to 47 and 76 to 119; these read EYYH…TITD and SIQV…AKEK.

The protein belongs to the MraZ family. As to quaternary structure, forms oligomers.

It localises to the cytoplasm. The protein resides in the nucleoid. In Dictyoglomus thermophilum (strain ATCC 35947 / DSM 3960 / H-6-12), this protein is Transcriptional regulator MraZ.